A 242-amino-acid chain; its full sequence is Caffeoyl-CoA O-methyltransferase 3 (242 aa).

Lys-16 is a binding site for substrate. Residues Thr-58, Glu-80, 82–83, Ser-88, Asp-106, and Ala-135 each bind S-adenosyl-L-methionine; that span reads GV. Asp-158 is a substrate binding site. An a divalent metal cation-binding site is contributed by Asp-158. Position 160 (Asp-160) interacts with S-adenosyl-L-methionine. A divalent metal cation contacts are provided by Asp-184 and Asn-185. Asn-189 contributes to the substrate binding site.

Belongs to the class I-like SAM-binding methyltransferase superfamily. Cation-dependent O-methyltransferase family. CCoAMT subfamily. It depends on Mg(2+) as a cofactor. Mostly expressed in the bottom and middle parts of the stems.

The enzyme catalyses (E)-caffeoyl-CoA + S-adenosyl-L-methionine = (E)-feruloyl-CoA + S-adenosyl-L-homocysteine + H(+). Its pathway is aromatic compound metabolism; phenylpropanoid biosynthesis. In terms of biological role, methylates caffeoyl-CoA to feruloyl-CoA and 5-hydroxyferuloyl-CoA to sinapoyl-CoA. Plays a role in the synthesis of feruloylated polysaccharides. Involved in the reinforcement of the plant cell wall. Also involved in the responding to wounding or pathogen challenge by the increased formation of cell wall-bound ferulic acid polymers. Also methylates free caffeic and 5-hydroxyferulic acids. The sequence is that of Caffeoyl-CoA O-methyltransferase 3 (CCOAOMT3) from Nicotiana tabacum (Common tobacco).